The sequence spans 180 residues: Cell division protein SepF (180 aa).

A disordered region spans residues 21-40; that stretch reads LDDDYDDGRAVGRDDRRAMH. Basic and acidic residues predominate over residues 27-40; it reads DGRAVGRDDRRAMH.

Belongs to the SepF family. In terms of assembly, homodimer. Interacts with FtsZ.

It is found in the cytoplasm. Cell division protein that is part of the divisome complex and is recruited early to the Z-ring. Probably stimulates Z-ring formation, perhaps through the cross-linking of FtsZ protofilaments. Its function overlaps with FtsA. The sequence is that of Cell division protein SepF from Frankia casuarinae (strain DSM 45818 / CECT 9043 / HFP020203 / CcI3).